Here is a 243-residue protein sequence, read N- to C-terminus: Homeobox protein nob-1 (243 aa).

Residues 1–12 (MISVMQQMINND) are compositionally biased toward polar residues. 2 disordered regions span residues 1 to 23 (MISVMQQMINNDSPEDSKESITS) and 40 to 67 (SIQGESRSERESETGSSPQLAPSSTGMV). The homeobox DNA-binding region spans 162–221 (GKKKRQPYKKDQISRLEYEYSVNQYLTNKRRSELSAQLMLDEKQVKVWFQNRRMKDKKLR).

It belongs to the abd-b homeobox family. As to quaternary structure, interacts with nuclear receptor nhr-25. Interacts with geminin homolog gmn-1. Interacts with homeodomain protein ceh-20.

It is found in the nucleus. Transcription factor, involved in posterior embryonic patterning, morphogenetic movements of the posterior hypodermis, and cell fate specification. Binds to the 5'-TAGT-3' motif in regulatory elements of genes, including Meis protein psa-3 and microRNA mir-57. Involved in a negative regulatory loop with mir-57 to specify posterior cell identities. Required for asymmetric division of the T hypodermal cell, acting via the regulation of asymmetric expression of psa-3 in cooperation with ceh-20 and the Wnt-MAPK pathway. Involved in the regulation of the onset of non-apoptotic cell death in the linker cell, acting together with the Wnt signaling pathway. Involved in promoting embryogenesis, in concert with orphan nuclear receptor nhr-25. May regulate expression of transcription factor dmd-3. This is Homeobox protein nob-1 from Caenorhabditis elegans.